We begin with the raw amino-acid sequence, 121 residues long: uncharacterized protein (121 aa).

A disordered region spans residues 20–98 (NEVRTSQSEV…PYYHGSKAST (79 aa)). A compositionally biased stretch (basic and acidic residues) spans 35-51 (KKSDNGEKDEKEEKELN).

This is an uncharacterized protein from Invertebrate iridescent virus 6 (IIV-6).